A 984-amino-acid polypeptide reads, in one-letter code: Translation initiation factor IF-2 (984 aa).

The disordered stretch occupies residues 32-402; that stretch reads PAKNATSTLT…TQPQRAAKRK (371 aa). Over residues 89–123 the composition is skewed to low complexity; that stretch reads PAETEAQASPAQPEAKAAAPAAEAEEAPAAKPAPA. The span at 126–136 shows a compositional bias: basic and acidic residues; that stretch reads RKAEARTEAPR. Composition is skewed to low complexity over residues 154–172 and 187–197; these read APET…SAAP and AETTESAPAEP. Residues 198-220 are compositionally biased toward basic and acidic residues; sequence AAEKAPAEKRRYEVSMEPEKDSV. Positions 255–270 are enriched in low complexity; sequence RPDPAAVQAQAAAAAQ. Residues 271–283 are compositionally biased toward basic and acidic residues; sequence AREERAERPDRGP. Residues 308 to 334 show a composition bias toward low complexity; that stretch reads GRPAPRSGAPRPGGARPAAGFGQPAQA. The region spanning 482-651 is the tr-type G domain; that stretch reads PRPPVVTIMG…ALQAEVLELK (170 aa). The tract at residues 491–498 is G1; it reads GHVDHGKT. Residue 491-498 participates in GTP binding; it reads GHVDHGKT. Positions 516-520 are G2; it reads GITQH. Residues 537–540 are G3; that stretch reads DTPG. Residues 537 to 541 and 591 to 594 each bind GTP; these read DTPGH and NKID. The tract at residues 591–594 is G4; sequence NKID. Residues 627 to 629 form a G5 region; it reads SAK.

It belongs to the TRAFAC class translation factor GTPase superfamily. Classic translation factor GTPase family. IF-2 subfamily.

It is found in the cytoplasm. Its function is as follows. One of the essential components for the initiation of protein synthesis. Protects formylmethionyl-tRNA from spontaneous hydrolysis and promotes its binding to the 30S ribosomal subunits. Also involved in the hydrolysis of GTP during the formation of the 70S ribosomal complex. The polypeptide is Translation initiation factor IF-2 (Oleidesulfovibrio alaskensis (strain ATCC BAA-1058 / DSM 17464 / G20) (Desulfovibrio alaskensis)).